A 186-amino-acid polypeptide reads, in one-letter code: Agglutinin isolectin 3 (186 aa).

A Pyrrolidone carboxylic acid modification is found at Gln1. Chitin-binding type-1 domains follow at residues 1 to 42 (QRCG…ACWT), 43 to 85 (SKRC…PCRA), 86 to 128 (DIKC…ACST), and 129 to 171 (DKPC…GCDG). 16 disulfides stabilise this stretch: Cys3-Cys18, Cys12-Cys24, Cys17-Cys31, Cys35-Cys40, Cys46-Cys61, Cys55-Cys67, Cys60-Cys74, Cys78-Cys83, Cys89-Cys104, Cys98-Cys110, Cys103-Cys117, Cys121-Cys126, Cys132-Cys147, Cys141-Cys153, Cys146-Cys160, and Cys164-Cys169. Position 10–12 (10–12 (MEC)) interacts with substrate. Residue 62-73 (SQYGHCGFGAEY) coordinates substrate. A substrate-binding site is contributed by 114 to 115 (SE). Positions 172 to 186 (VFAEAIATNSTLLAE) are excised as a propeptide. N-linked (GlcNAc...) asparagine glycosylation occurs at Asn180.

Homodimer, u-shaped.

In terms of biological role, N-acetyl-D-glucosamine / N-acetyl-D-neuraminic acid binding lectin. The polypeptide is Agglutinin isolectin 3 (Triticum aestivum (Wheat)).